The primary structure comprises 362 residues: Probable endopolygalacturonase II (362 aa).

A signal peptide spans 1–20 (MHSFASLLAYGLAAGATLAS). The propeptide occupies 21-27 (ASPIEAR). A disulfide bridge links cysteine 30 with cysteine 45. The stretch at 156–186 (SDDITLTDITINNADGDSLGGHNTDAFDVGN) is one PbH1 1 repeat. The Proton donor role is filled by aspartate 201. Cysteine 203 and cysteine 219 are oxidised to a cystine. PbH1 repeat units follow at residues 209-229 (GENIWFTGGTCIGGHGLSIGS), 238-259 (VKNVTIEHSTVSNSENAVRIKT), 267-289 (VSEITYSNIVMSGISDYGVVIQQ), and 301-322 (TNGVTITDVKLESVTGTVDSKA). The active site involves histidine 223. N-linked (GlcNAc...) asparagine glycosylation occurs at asparagine 240. 2 cysteine pairs are disulfide-bonded: cysteine 329-cysteine 334 and cysteine 353-cysteine 362.

It belongs to the glycosyl hydrolase 28 family.

It localises to the secreted. It catalyses the reaction (1,4-alpha-D-galacturonosyl)n+m + H2O = (1,4-alpha-D-galacturonosyl)n + (1,4-alpha-D-galacturonosyl)m.. Functionally, involved in maceration and soft-rotting of plant tissue. Hydrolyzes the 1,4-alpha glycosidic bonds of de-esterified pectate in the smooth region of the plant cell wall. The chain is Probable endopolygalacturonase II (pgaII) from Aspergillus kawachii (strain NBRC 4308) (White koji mold).